The following is a 124-amino-acid chain: Fluoride-specific ion channel FluC (124 aa).

Transmembrane regions (helical) follow at residues 4–24 (LIFVALGGSIGAVFRYLISIF), 35–55 (FGTLMVNVIGSFLMGVIYALG), 62–82 (PEIKALVGVGLLGALTTFSTF), and 102–122 (IALNLCLCLFMVYLGQQLVFS). Positions 74 and 77 each coordinate Na(+).

It belongs to the fluoride channel Fluc/FEX (TC 1.A.43) family.

The protein localises to the cell inner membrane. The enzyme catalyses fluoride(in) = fluoride(out). Na(+) is not transported, but it plays an essential structural role and its presence is essential for fluoride channel function. In terms of biological role, fluoride-specific ion channel. Important for reducing fluoride concentration in the cell, thus reducing its toxicity. The sequence is that of Fluoride-specific ion channel FluC from Shewanella loihica (strain ATCC BAA-1088 / PV-4).